The following is a 277-amino-acid chain: Large ribosomal subunit protein uL2 (277 aa).

The disordered stretch occupies residues 222–277 (GVTMNPVDHPHGGGEGRTSGGRNPVTPWGFPTKGKKTRNNKATDKFIVSSRHKRKK).

It belongs to the universal ribosomal protein uL2 family. In terms of assembly, part of the 50S ribosomal subunit. Forms a bridge to the 30S subunit in the 70S ribosome.

One of the primary rRNA binding proteins. Required for association of the 30S and 50S subunits to form the 70S ribosome, for tRNA binding and peptide bond formation. It has been suggested to have peptidyltransferase activity; this is somewhat controversial. Makes several contacts with the 16S rRNA in the 70S ribosome. This chain is Large ribosomal subunit protein uL2, found in Xanthobacter autotrophicus (strain ATCC BAA-1158 / Py2).